Here is a 625-residue protein sequence, read N- to C-terminus: DNA-directed RNA polymerase subunit gamma (625 aa).

Positions 71, 73, 86, and 89 each coordinate Zn(2+). Aspartate 467, aspartate 469, and aspartate 471 together coordinate Mg(2+).

Belongs to the RNA polymerase beta' chain family. RpoC1 subfamily. As to quaternary structure, in cyanobacteria the RNAP catalytic core is composed of 2 alpha, 1 beta, 1 beta', 1 gamma and 1 omega subunit. When a sigma factor is associated with the core the holoenzyme is formed, which can initiate transcription. Mg(2+) is required as a cofactor. It depends on Zn(2+) as a cofactor.

It carries out the reaction RNA(n) + a ribonucleoside 5'-triphosphate = RNA(n+1) + diphosphate. Functionally, DNA-dependent RNA polymerase catalyzes the transcription of DNA into RNA using the four ribonucleoside triphosphates as substrates. The sequence is that of DNA-directed RNA polymerase subunit gamma from Trichormus variabilis (strain ATCC 29413 / PCC 7937) (Anabaena variabilis).